The chain runs to 397 residues: Acetyl-CoA acetyltransferase, cytosolic (397 aa).

Met-1 carries the post-translational modification N-acetylmethionine. Cys-92 (acyl-thioester intermediate) is an active-site residue. At Lys-200 the chain carries N6-acetyllysine. Positions 223 and 226 each coordinate CoA. N6-acetyllysine is present on residues Lys-233 and Lys-235. Ser-252 provides a ligand contact to CoA. The active-site Proton donor/acceptor is Cys-383.

Belongs to the thiolase-like superfamily. Thiolase family. In terms of assembly, homotetramer.

It localises to the cytoplasm. The protein localises to the cytosol. It catalyses the reaction 2 acetyl-CoA = acetoacetyl-CoA + CoA. It participates in lipid metabolism; fatty acid metabolism. In terms of biological role, involved in the biosynthetic pathway of cholesterol. This Homo sapiens (Human) protein is Acetyl-CoA acetyltransferase, cytosolic (ACAT2).